Here is a 592-residue protein sequence, read N- to C-terminus: Glycosyltransferase 25 family member (592 aa).

A signal peptide spans 1–13 (MLALLLTTTIVSG). 2 N-linked (GlcNAc...) asparagine glycosylation sites follow: Asn249 and Asn510. 2 stretches are compositionally biased toward basic and acidic residues: residues 552 to 563 (RIQEPKKGDKEQ) and 579 to 592 (GEHD…RSEL). Residues 552 to 592 (RIQEPKKGDKEQLPNAPALLSESGIGQGEHDLETKNRRSEL) are disordered. The Prevents secretion from ER motif lies at 589–592 (RSEL).

Belongs to the glycosyltransferase 25 family.

It localises to the endoplasmic reticulum lumen. This Anopheles gambiae (African malaria mosquito) protein is Glycosyltransferase 25 family member.